Reading from the N-terminus, the 239-residue chain is Diablo IAP-binding mitochondrial protein (239 aa).

The N-terminal 21 residues, 1–21, are a transit peptide targeting the mitochondrion; it reads MAALKSWLSRSVTSFFRYRQC. The IAP-binding motif lies at 56-60; that stretch reads AVPIA. The interval 217 to 239 is disordered; it reads RQKTQEEGEERAESEQEAYLRED.

This sequence belongs to the Smac/DIABLO protein family. As to quaternary structure, homodimer. Interacts with BIRC2/c-IAP1 (via BIR3 domain). Interacts with BIRC6/BRUCE; inhibits BIRC6 activity. Interacts with BIRC7/livin. Interacts with XIAP/BIRC4 (via BIR3 domain). Interacts with the monomeric and dimeric form of BIRC5/survivin. Interacts with AREL1 (via HECT domain); in the cytoplasm following induction of apoptosis. Interacts with BEX3. In terms of processing, ubiquitinated by BIRC7/livin. Ubiquitinated by BIRC6. Post-translationally, the precursor form is proteolytically cleaved by mitochondrial processing peptidase MPP to remove the transit peptide and produce an intermediate form. This is then processed by PARL to produce the mature cleaved form which is released from mitochondria into the cytosol in apoptotic cells. In terms of tissue distribution, ubiquitously expressed with highest expression in testis. Expression is also high in heart, liver, kidney, spleen, prostate and ovary. Low in brain, lung, thymus and peripheral blood leukocytes. Isoform 3 is ubiquitously expressed.

The protein resides in the mitochondrion. Its subcellular location is the cytoplasm. The protein localises to the cytosol. Its function is as follows. Promotes apoptosis by activating caspases in the cytochrome c/Apaf-1/caspase-9 pathway. Acts by opposing the inhibitory activity of inhibitor of apoptosis proteins (IAP). Inhibits the activity of BIRC6/BRUCE by inhibiting its binding to caspases. Attenuates the stability and apoptosis-inhibiting activity of XIAP/BIRC4 by promoting XIAP/BIRC4 ubiquitination and degradation through the ubiquitin-proteasome pathway. Also disrupts XIAP/BIRC4 interacting with processed caspase-9 and promotes caspase-3 activation. Functionally, defective in the capacity to down-regulate the XIAP/BIRC4 abundance. The sequence is that of Diablo IAP-binding mitochondrial protein from Homo sapiens (Human).